A 189-amino-acid chain; its full sequence is Hypoxanthine/guanine phosphoribosyltransferase (189 aa).

It belongs to the purine/pyrimidine phosphoribosyltransferase family. Archaeal HPRT subfamily. Homodimer.

The protein localises to the cytoplasm. The catalysed reaction is IMP + diphosphate = hypoxanthine + 5-phospho-alpha-D-ribose 1-diphosphate. The enzyme catalyses GMP + diphosphate = guanine + 5-phospho-alpha-D-ribose 1-diphosphate. Its pathway is purine metabolism; IMP biosynthesis via salvage pathway; IMP from hypoxanthine: step 1/1. Its function is as follows. Catalyzes a salvage reaction resulting in the formation of IMP that is energically less costly than de novo synthesis. The chain is Hypoxanthine/guanine phosphoribosyltransferase from Methanosarcina mazei (strain ATCC BAA-159 / DSM 3647 / Goe1 / Go1 / JCM 11833 / OCM 88) (Methanosarcina frisia).